A 126-amino-acid polypeptide reads, in one-letter code: Histone H2B 5 (126 aa).

Residues 1–12 (MPEPAKSAPAPK) show a composition bias toward low complexity. The segment at 1–35 (MPEPAKSAPAPKKGSKKAVTKTQKKGDKKRRKSRK) is disordered. An N6-acetyllysine mark is found at Lys-6 and Lys-13. The span at 13 to 34 (KGSKKAVTKTQKKGDKKRRKSR) shows a compositional bias: basic residues. Ser-15 is modified (phosphoserine). Residues Lys-16 and Lys-21 each carry the N6-acetyllysine modification. An O-linked (GlcNAc) serine glycan is attached at Ser-113. A Glycyl lysine isopeptide (Lys-Gly) (interchain with G-Cter in ubiquitin) cross-link involves residue Lys-121.

This sequence belongs to the histone H2B family. The nucleosome is a histone octamer containing two molecules each of H2A, H2B, H3 and H4 assembled in one H3-H4 heterotetramer and two H2A-H2B heterodimers. The octamer wraps approximately 147 bp of DNA. In terms of processing, monoubiquitination of Lys-121 by the BRE1 gives a specific tag for epigenetic transcriptional activation and is also prerequisite for histone H3 'Lys-4' and 'Lys-79' methylation. Post-translationally, phosphorylated on Ser-15 during apoptosis; which facilitates apoptotic chromatin condensation. GlcNAcylation at Ser-113 promotes monoubiquitination of Lys-121. It fluctuates in response to extracellular glucose, and associates with transcribed genes.

The protein localises to the nucleus. It localises to the chromosome. Functionally, core component of nucleosome. Nucleosomes wrap and compact DNA into chromatin, limiting DNA accessibility to the cellular machineries which require DNA as a template. Histones thereby play a central role in transcription regulation, DNA repair, DNA replication and chromosomal stability. DNA accessibility is regulated via a complex set of post-translational modifications of histones, also called histone code, and nucleosome remodeling. The chain is Histone H2B 5 (H2B-V) from Gallus gallus (Chicken).